Here is a 557-residue protein sequence, read N- to C-terminus: Urocanate hydratase (557 aa).

The segment at 1–20 (MSNPRHNEREVRSPRGDELN) is disordered. NAD(+) contacts are provided by residues 52–53 (GG), Gln-130, 176–178 (GMG), Glu-196, Arg-201, 242–243 (NA), 263–267 (QTSAH), 273–274 (YL), and Tyr-322. The active site involves Cys-410. Residue Gly-492 coordinates NAD(+).

It belongs to the urocanase family. NAD(+) is required as a cofactor.

It localises to the cytoplasm. The catalysed reaction is 4-imidazolone-5-propanoate = trans-urocanate + H2O. It participates in amino-acid degradation; L-histidine degradation into L-glutamate; N-formimidoyl-L-glutamate from L-histidine: step 2/3. Catalyzes the conversion of urocanate to 4-imidazolone-5-propionate. This chain is Urocanate hydratase, found in Brucella abortus (strain S19).